The sequence spans 103 residues: Large ribosomal subunit protein uL23 (103 aa).

The protein belongs to the universal ribosomal protein uL23 family. In terms of assembly, part of the 50S ribosomal subunit. Contacts protein L29, and trigger factor when it is bound to the ribosome.

Functionally, one of the early assembly proteins it binds 23S rRNA. One of the proteins that surrounds the polypeptide exit tunnel on the outside of the ribosome. Forms the main docking site for trigger factor binding to the ribosome. This Chlorobaculum tepidum (strain ATCC 49652 / DSM 12025 / NBRC 103806 / TLS) (Chlorobium tepidum) protein is Large ribosomal subunit protein uL23.